The chain runs to 421 residues: MDRNSFTAYGPATGAITESGEQENDHTKPHTWKTFAKYACFESEAERQWWNDSGALIARFLSLTNGDIDQQYQCLLFVRQVLIPALGPYPPVRRCCINTTEIGMELSLNFQGPGEPVFRVSIDPVSRMTGTPMDPLNINTVNNMITRLASMGIKGFDRTLHHHFTREFCMSEQSMQSYQRDSGEAIAWSQTILAFDFKGGDVVTKQYIWTRHAARASGLHPHSLIRRAISRVENQMHCSAAVELVLEYMETFNADIPVPFFSWDLVDPTQSRFKIYGISWQWSWAKAEEVCTLGGKLNHHDIDLLKKLWHILKLDEFTPTMGFTWNYEIRPGQPKPEVRLYLAICDRSDEEVAQAVVQWFELLGWHERAQSYPETLRYLHKTKSAHTWLSVTVSEKGVYTSLYYHPLGNGSDDFKIRENWF.

The disordered stretch occupies residues 1-28; sequence MDRNSFTAYGPATGAITESGEQENDHTK. L-tryptophan is bound at residue Glu105. Residues Arg119, Arg272, Lys274, Tyr276, and Tyr341 each coordinate substrate.

This sequence belongs to the tryptophan dimethylallyltransferase family.

It catalyses the reaction yaequinolone E + dimethylallyl diphosphate + H2O = [(1'E)-3'-hydroxy-3',7'-dimethylocta-1',6'-dien-1'-yl]-quinolinone B + diphosphate. The protein operates within secondary metabolite biosynthesis. Its pathway is alkaloid biosynthesis. It participates in mycotoxin biosynthesis. Functionally, prenyltransferase; part of the gene cluster that mediates the biosynthesis of the aspoquinolone mycotoxins. Within the pathway, the prenyltransferase asqH2 performs the second alkylation with DMAPP at delta(3') double bond to yield a carbenium ion intermediate, which can be attacked by H(2)O to yield a styrenyl quinolone containing a C3'-hydroxyprenyl chain. The first step of the pathway is catalyzed by the nonribosomal peptide synthetase asqK that condenses anthranilic acid and O-methyl-L-tyrosine to produce 4'-methoxycyclopeptin. 4'-methoxycyclopeptin is then converted to 4'-methoxydehydrocyclopeptin by the ketoglutarate-dependent dioxygenase asqJ. AsqJ also converts its first product 4'-methoxydehydrocyclopeptin to 4'-methoxycyclopenin. The following conversion of 4'-methoxycyclopenin into 4'-methoxyviridicatin is catalyzed by the cyclopenase asqI. 4'-methoxyviridicatin is the precursor of quinolone natural products, and is further converted to quinolinone B. The prenyltransferase asqH1 then catalyzes the canonical Friedel-Crafts alkylation of quinolinone B with dimethylallyl cation to yield dimethylallyl quinolone, which is subjected to FAD-dependent dehydrogenation by the FAD-linked oxidoreductase asqF to yield conjugated aryl diene. The delta(3') double bond then serves as the site of the second alkylation with DMAPP catalyzed by the prenyltransferase asqH2 to yield a carbenium ion intermediate, which can be attacked by H(2)O to yield a styrenyl quinolone containing a C3'-hydroxyprenyl chain. The FAD-dependent monooxygenase asqG performs epoxidation of the terminal C7'-C8' olefin. Finally, after dehydratation of the epoxide at C3 by asqC, the quinolone epoxide rearrangement protein asqO catalyzes an enzymatic 3-exo-tet cyclization to yield the cyclopropyl-THF ring system in aspoquinolone. This is Prenyltransferase asqH2 from Emericella nidulans (strain FGSC A4 / ATCC 38163 / CBS 112.46 / NRRL 194 / M139) (Aspergillus nidulans).